The following is a 126-amino-acid chain: Fluoride-specific ion channel FluC 2 (126 aa).

A run of 4 helical transmembrane segments spans residues 5–25 (TALT…GSVL), 44–64 (GTLT…GLAL), 68–88 (AALL…TWML), and 99–119 (MVSA…AALL). Na(+) is bound by residues Gly-78 and Thr-81.

Belongs to the fluoride channel Fluc/FEX (TC 1.A.43) family.

The protein resides in the cell membrane. It carries out the reaction fluoride(in) = fluoride(out). Its activity is regulated as follows. Na(+) is not transported, but it plays an essential structural role and its presence is essential for fluoride channel function. Fluoride-specific ion channel. Important for reducing fluoride concentration in the cell, thus reducing its toxicity. The polypeptide is Fluoride-specific ion channel FluC 2 (Mycobacterium bovis (strain ATCC BAA-935 / AF2122/97)).